The following is a 187-amino-acid chain: GMP synthase [glutamine-hydrolyzing] subunit A (187 aa).

The Glutamine amidotransferase type-1 domain occupies 1–187; that stretch reads MILIIDNHGQ…KNFAKLCGEL (187 aa). Catalysis depends on Cys76, which acts as the Nucleophile. Active-site residues include His164 and Glu166.

In terms of assembly, heterodimer composed of a glutamine amidotransferase subunit (A) and a GMP-binding subunit (B).

The enzyme catalyses XMP + L-glutamine + ATP + H2O = GMP + L-glutamate + AMP + diphosphate + 2 H(+). It participates in purine metabolism; GMP biosynthesis; GMP from XMP (L-Gln route): step 1/1. Its function is as follows. Catalyzes the synthesis of GMP from XMP. This chain is GMP synthase [glutamine-hydrolyzing] subunit A, found in Methanopyrus kandleri (strain AV19 / DSM 6324 / JCM 9639 / NBRC 100938).